Reading from the N-terminus, the 240-residue chain is Guanylate kinase (240 aa).

Residues 56 to 236 enclose the Guanylate kinase-like domain; it reads GRIFVITGPS…TLNELKSILL (181 aa). 63 to 70 is an ATP binding site; that stretch reads GPSGVGKS.

This sequence belongs to the guanylate kinase family.

The protein localises to the cytoplasm. The catalysed reaction is GMP + ATP = GDP + ADP. Essential for recycling GMP and indirectly, cGMP. This is Guanylate kinase (gmk) from Mycoplasma genitalium (strain ATCC 33530 / DSM 19775 / NCTC 10195 / G37) (Mycoplasmoides genitalium).